A 339-amino-acid polypeptide reads, in one-letter code: ATPase GET3 (339 aa).

34–41 (KGGVGKTT) serves as a coordination point for ATP. Aspartate 63 is an active-site residue. ATP contacts are provided by glutamate 243 and asparagine 270. Positions 281 and 284 each coordinate Zn(2+).

This sequence belongs to the arsA ATPase family. As to quaternary structure, homodimer.

It is found in the cytoplasm. The protein localises to the endoplasmic reticulum. In terms of biological role, ATPase required for the post-translational delivery of tail-anchored (TA) proteins to the endoplasmic reticulum. Recognizes and selectively binds the transmembrane domain of TA proteins in the cytosol. This complex then targets to the endoplasmic reticulum by membrane-bound receptors, where the tail-anchored protein is released for insertion. This process is regulated by ATP binding and hydrolysis. ATP binding drives the homodimer towards the closed dimer state, facilitating recognition of newly synthesized TA membrane proteins. ATP hydrolysis is required for insertion. Subsequently, the homodimer reverts towards the open dimer state, lowering its affinity for the membrane-bound receptor, and returning it to the cytosol to initiate a new round of targeting. This Coccidioides immitis (strain RS) (Valley fever fungus) protein is ATPase GET3.